We begin with the raw amino-acid sequence, 175 residues long: MMYIVFIMSVLYVVGFIGFSSKPSPVYGGMSLVVSGGLGCGIIMSSGGSFLGLVVFLVYLGGMMVVFGYTIAMATEEYPETWGSNVVVLSAFLVGLLMEVFMVVWLFSGEHELVGFYFGGLESFVTLGEGGFEYVREDYSGGASLYSCGFWFLAMAGWMLFVSIFIATEITRKRY.

Helical transmembrane passes span 1–21, 24–44, 51–71, 87–107, 112–132, and 148–168; these read MMYIVFIMSVLYVVGFIGFSS, SPVYGGMSLVVSGGLGCGIIM, LGLVVFLVYLGGMMVVFGYTI, VVLSAFLVGLLMEVFMVVWLF, ELVGFYFGGLESFVTLGEGGF, and CGFWFLAMAGWMLFVSIFIAT.

This sequence belongs to the complex I subunit 6 family. Core subunit of respiratory chain NADH dehydrogenase (Complex I) which is composed of 45 different subunits.

Its subcellular location is the mitochondrion inner membrane. The enzyme catalyses a ubiquinone + NADH + 5 H(+)(in) = a ubiquinol + NAD(+) + 4 H(+)(out). Core subunit of the mitochondrial membrane respiratory chain NADH dehydrogenase (Complex I) which catalyzes electron transfer from NADH through the respiratory chain, using ubiquinone as an electron acceptor. Essential for the catalytic activity and assembly of complex I. The sequence is that of NADH-ubiquinone oxidoreductase chain 6 (MT-ND6) from Elephas maximus (Indian elephant).